The following is an 87-amino-acid chain: Small ribosomal subunit protein bS20 (87 aa).

Residues 1–22 form a disordered region; the sequence is MANSAQARKRARQSLKARAHNA. Over residues 7–19 the composition is skewed to basic residues; it reads ARKRARQSLKARA.

The protein belongs to the bacterial ribosomal protein bS20 family.

Its function is as follows. Binds directly to 16S ribosomal RNA. This chain is Small ribosomal subunit protein bS20, found in Laribacter hongkongensis (strain HLHK9).